The chain runs to 71 residues: UPF0346 protein SPP_0954 (71 aa).

The protein belongs to the UPF0346 family.

In Streptococcus pneumoniae (strain P1031), this protein is UPF0346 protein SPP_0954.